Reading from the N-terminus, the 334-residue chain is E3 ubiquitin-protein ligase CIP8 (334 aa).

The tract at residues 111-158 (LNSRNEIDDDEDEDEDDGDEEEEDEEENLTVNDEEDEEDDLRRRNRFP) is disordered. A compositionally biased stretch (acidic residues) spans 117–149 (IDDDEDEDEDDGDEEEEDEEENLTVNDEEDEED). Residues 257-298 (CAVCKDGMVMGETGKKLPCGHCYHGDCIVPWLGTRNSCPVCR) form an RING-type; atypical zinc finger. The interval 307–334 (EYEEERKKRTSTVSDSAAASSSSSTSRY) is disordered. The span at 317–334 (STVSDSAAASSSSSTSRY) shows a compositional bias: low complexity.

In terms of assembly, interacts with the RING finger of COP1. Interacts with UBC8 through its N-terminal region. In terms of tissue distribution, expressed in both light- and dark-grown seedlings.

It localises to the cytoplasm. The enzyme catalyses S-ubiquitinyl-[E2 ubiquitin-conjugating enzyme]-L-cysteine + [acceptor protein]-L-lysine = [E2 ubiquitin-conjugating enzyme]-L-cysteine + N(6)-ubiquitinyl-[acceptor protein]-L-lysine.. The protein operates within protein modification; protein ubiquitination. Functionally, E3 ubiquitin-protein ligase that mediates ubiquitination and subsequent proteasomal degradation of target proteins. Probably forms a minimal ubiquitin ligase complex in cooperation with the E2 enzyme UBC8. Its interaction with COP1 suggests that it may participate in proteasome-mediated degradation of HY5 in vivo. The sequence is that of E3 ubiquitin-protein ligase CIP8 (CIP8) from Arabidopsis thaliana (Mouse-ear cress).